The sequence spans 165 residues: MSNSRPAHARKAEIVVEIVSKIKSAQGVAIAEYKHLTVAKMTELRVQALKQNIDIKVYKDSLVRRAAEELGLVDLIPFLTQQNVFIFSNEDSISAAKLVANFAKKNEALKLKAGIYEGKVVDTVGINEVASLPSKEELYSMFASSLLYPLRKAMAAINAVAETRN.

It belongs to the universal ribosomal protein uL10 family. In terms of assembly, part of the ribosomal stalk of the 50S ribosomal subunit. The N-terminus interacts with L11 and the large rRNA to form the base of the stalk. The C-terminus forms an elongated spine to which L12 dimers bind in a sequential fashion forming a multimeric L10(L12)X complex.

Its function is as follows. Forms part of the ribosomal stalk, playing a central role in the interaction of the ribosome with GTP-bound translation factors. The sequence is that of Large ribosomal subunit protein uL10 from Mycoplasma mycoides subsp. mycoides SC (strain CCUG 32753 / NCTC 10114 / PG1).